A 464-amino-acid chain; its full sequence is Siroheme synthase (464 aa).

The interval 1–203 is precorrin-2 dehydrogenase /sirohydrochlorin ferrochelatase; the sequence is MEYLPLFHNL…GQGAEAERLL (203 aa). NAD(+)-binding positions include 22–23 and 43–44; these read EI and PE. Phosphoserine is present on S128. Residues 216 to 464 form a uroporphyrinogen-III C-methyltransferase region; it reads GEVYLVGAGP…AWFEGAQSEV (249 aa). P225 contributes to the S-adenosyl-L-methionine binding site. The active-site Proton acceptor is D248. The active-site Proton donor is the K270. Residues 301 to 303, I306, 331 to 332, M383, and G412 contribute to the S-adenosyl-L-methionine site; these read GGD and TA.

It in the N-terminal section; belongs to the precorrin-2 dehydrogenase / sirohydrochlorin ferrochelatase family. The protein in the C-terminal section; belongs to the precorrin methyltransferase family.

The enzyme catalyses uroporphyrinogen III + 2 S-adenosyl-L-methionine = precorrin-2 + 2 S-adenosyl-L-homocysteine + H(+). The catalysed reaction is precorrin-2 + NAD(+) = sirohydrochlorin + NADH + 2 H(+). It carries out the reaction siroheme + 2 H(+) = sirohydrochlorin + Fe(2+). It functions in the pathway cofactor biosynthesis; adenosylcobalamin biosynthesis; precorrin-2 from uroporphyrinogen III: step 1/1. Its pathway is cofactor biosynthesis; adenosylcobalamin biosynthesis; sirohydrochlorin from precorrin-2: step 1/1. The protein operates within porphyrin-containing compound metabolism; siroheme biosynthesis; precorrin-2 from uroporphyrinogen III: step 1/1. It participates in porphyrin-containing compound metabolism; siroheme biosynthesis; siroheme from sirohydrochlorin: step 1/1. It functions in the pathway porphyrin-containing compound metabolism; siroheme biosynthesis; sirohydrochlorin from precorrin-2: step 1/1. Functionally, multifunctional enzyme that catalyzes the SAM-dependent methylations of uroporphyrinogen III at position C-2 and C-7 to form precorrin-2 via precorrin-1. Then it catalyzes the NAD-dependent ring dehydrogenation of precorrin-2 to yield sirohydrochlorin. Finally, it catalyzes the ferrochelation of sirohydrochlorin to yield siroheme. The chain is Siroheme synthase from Pseudomonas fluorescens (strain ATCC BAA-477 / NRRL B-23932 / Pf-5).